A 246-amino-acid chain; its full sequence is Carbonic anhydrase (246 aa).

Positions M1–A22 are cleaved as a signal peptide. The 224-residue stretch at S23–E246 folds into the Alpha-carbonic anhydrase domain. Residues C46 and C201 are joined by a disulfide bond. Catalysis depends on H84, which acts as the Proton acceptor. Zn(2+) contacts are provided by H111, H113, and H130. T197 to T198 lines the substrate pocket.

The protein belongs to the alpha-carbonic anhydrase family. It depends on Zn(2+) as a cofactor.

It is found in the periplasm. It carries out the reaction hydrogencarbonate + H(+) = CO2 + H2O. In terms of biological role, reversible hydration of carbon dioxide. In Klebsiella pneumoniae, this protein is Carbonic anhydrase (cah).